A 138-amino-acid polypeptide reads, in one-letter code: ATP synthase epsilon chain (138 aa).

The protein belongs to the ATPase epsilon chain family. In terms of assembly, F-type ATPases have 2 components, CF(1) - the catalytic core - and CF(0) - the membrane proton channel. CF(1) has five subunits: alpha(3), beta(3), gamma(1), delta(1), epsilon(1). CF(0) has three main subunits: a, b and c.

It is found in the cell inner membrane. Its function is as follows. Produces ATP from ADP in the presence of a proton gradient across the membrane. This Endomicrobium trichonymphae protein is ATP synthase epsilon chain.